Reading from the N-terminus, the 535-residue chain is Phosphoenolpyruvate carboxykinase (ATP) 1 (535 aa).

Residues arginine 58, tyrosine 193, and lysine 199 each contribute to the substrate site. ATP contacts are provided by residues lysine 199, histidine 218, and 234 to 242; that span reads GLSGTGKTT. Residues lysine 199 and histidine 218 each coordinate Mn(2+). Mn(2+) is bound at residue aspartate 255. ATP is bound by residues glutamate 283, arginine 321, 440–441, and threonine 446; that span reads RI. A substrate-binding site is contributed by arginine 321.

This sequence belongs to the phosphoenolpyruvate carboxykinase (ATP) family. The cofactor is Mn(2+).

It localises to the cytoplasm. The enzyme catalyses oxaloacetate + ATP = phosphoenolpyruvate + ADP + CO2. It functions in the pathway carbohydrate biosynthesis; gluconeogenesis. Functionally, involved in the gluconeogenesis. Catalyzes the conversion of oxaloacetate (OAA) to phosphoenolpyruvate (PEP) through direct phosphoryl transfer between the nucleoside triphosphate and OAA. The polypeptide is Phosphoenolpyruvate carboxykinase (ATP) 1 (Salinibacter ruber (strain DSM 13855 / M31)).